The primary structure comprises 235 residues: Phosphoribosylaminoimidazole-succinocarboxamide synthase (235 aa).

The protein belongs to the SAICAR synthetase family.

The catalysed reaction is 5-amino-1-(5-phospho-D-ribosyl)imidazole-4-carboxylate + L-aspartate + ATP = (2S)-2-[5-amino-1-(5-phospho-beta-D-ribosyl)imidazole-4-carboxamido]succinate + ADP + phosphate + 2 H(+). It functions in the pathway purine metabolism; IMP biosynthesis via de novo pathway; 5-amino-1-(5-phospho-D-ribosyl)imidazole-4-carboxamide from 5-amino-1-(5-phospho-D-ribosyl)imidazole-4-carboxylate: step 1/2. In Streptococcus pneumoniae (strain ATCC 700669 / Spain 23F-1), this protein is Phosphoribosylaminoimidazole-succinocarboxamide synthase.